The chain runs to 108 residues: Class I hydrophobin 3 (108 aa).

A signal peptide spans 1–17 (MFSRVFAVASLAALALA). Disulfide bonds link cysteine 26-cysteine 87, cysteine 33-cysteine 81, cysteine 34-cysteine 67, and cysteine 88-cysteine 101.

Belongs to the fungal hydrophobin family. Self-assembles to form functional amyloid fibrils called rodlets. Self-assembly into fibrillar rodlets occurs spontaneously at hydrophobic:hydrophilic interfaces and the rodlets further associate laterally to form amphipathic monolayers.

The protein resides in the secreted. It is found in the cell wall. Its function is as follows. Aerial growth, conidiation, and dispersal of filamentous fungi in the environment rely upon a capability of their secreting small amphipathic proteins called hydrophobins (HPBs) with low sequence identity. Class I can self-assemble into an outermost layer of rodlet bundles on aerial cell surfaces, conferring cellular hydrophobicity that supports fungal growth, development and dispersal; whereas Class II form highly ordered films at water-air interfaces through intermolecular interactions but contribute nothing to the rodlet structure. This Pisolithus tinctorius (Dead man's foot) protein is Class I hydrophobin 3.